The sequence spans 406 residues: Probable transcription factor FPSE_09188 (406 aa).

The segment at 1-72 is disordered; that stretch reads MELPTYAVSQ…PKGSSSRCNG (72 aa). Positions 7 to 20 are enriched in low complexity; sequence AVSQSLLASRSVSS.

The protein belongs to the bZIP family.

Its subcellular location is the nucleus. Functionally, the two putative transcription factors FPSE_09188 and FPSE_09189 could be responsible for orchestrating expression of the W493 A and B biosynthesis cluster genes. W493 A and B consist of six amino acid residues D-allo-thr, L-Ala, D-Ala, L-Gln, D-Tyr, and L-Val/L-Ile linked to a 3-hydroxy-4-methyltetradecanoic acid polyketide chain. The sequence is that of Probable transcription factor FPSE_09188 from Fusarium pseudograminearum (strain CS3096) (Wheat and barley crown-rot fungus).